The chain runs to 834 residues: Protein argonaute (834 aa).

The region spanning 210–326 is the PAZ domain; sequence SLLQILMEYT…LPIEFCFVVK (117 aa). The region spanning 500 to 799 is the Piwi domain; that stretch reads YLFFILDKNS…VSNLARYQDV (300 aa).

Belongs to the argonaute family. Ago subfamily. Ago1, chp1 and tas3 interact to form the core of the RNA-induced transcriptional silencing (RITS) complex. The RITS complex interacts with the RDRC complex via interaction between ago1 and hrr1. Clr4 has a role in mediating this interaction. Component of the argonaute siRNA chaperone (ARC) complex composed of ago1, arb1 and arb2. Interacts with arb1.

It localises to the cytoplasm. It is found in the nucleus. The protein resides in the chromosome. Its subcellular location is the centromere. The protein localises to the telomere. Required for G1 arrest and mating in response to nitrogen starvation. Ago1 regulation of cytokinesis and cell cycle checkpoints occurs downstream of dcr1. Required, indirectly, for regulated hyperphosphorylation of cdc2. Has a role in the RNA interference (RNAi) pathway which is important for heterochromatin formation, accurate chromosome segregation, centromere cohesion and telomere function during mitosis and meiosis. Required for silencing at the centromeres and for initiation of transcriptionally silent heterochromatin at the mating type locus. Promotes histone H3K9 methylation necessary for centromere function. Required for recruitment of swi6 and cohesin to an ectopic dg repeat. A member of the RNA-induced transcriptional silencing (RITS) complex which is involved in the biosynthesis of dsRNA from primer siRNAs provided by the RNA-directed RNA polymerase (RDRC) complex. Has ribonuclease H-like cleavage (slicing) activity towards target messages complementary to siRNA and can direct site-specific cleavage of RNA substrates via siRNA. Slicing activity is required for both post-transcriptional and transcriptional gene silencing as well as for histone H3 'Lys-10' methylation spreading, conversion of double-stranded siRNA to single-stranded siRNA and siRNA-dependent association of ago1 with chromatin. A member of the argonaute siRNA chaperone (ARC) complex which is required for histone H3K9 methylation, heterochromatin assembly and siRNA generation. The ARC complex contains mostly double-stranded siRNA. This chain is Protein argonaute (ago1), found in Schizosaccharomyces pombe (strain 972 / ATCC 24843) (Fission yeast).